The chain runs to 928 residues: Isoleucine--tRNA ligase (928 aa).

The 'HIGH' region motif lies at 57 to 67; the sequence is PFANGNIHMGH. Glutamate 552 contributes to the L-isoleucyl-5'-AMP binding site. The short motif at 593 to 597 is the 'KMSKS' region element; the sequence is KMSKS. ATP is bound at residue lysine 596. 4 residues coordinate Zn(2+): cysteine 887, cysteine 890, cysteine 907, and cysteine 910.

This sequence belongs to the class-I aminoacyl-tRNA synthetase family. IleS type 1 subfamily. In terms of assembly, monomer. It depends on Zn(2+) as a cofactor.

It is found in the cytoplasm. The catalysed reaction is tRNA(Ile) + L-isoleucine + ATP = L-isoleucyl-tRNA(Ile) + AMP + diphosphate. Catalyzes the attachment of isoleucine to tRNA(Ile). As IleRS can inadvertently accommodate and process structurally similar amino acids such as valine, to avoid such errors it has two additional distinct tRNA(Ile)-dependent editing activities. One activity is designated as 'pretransfer' editing and involves the hydrolysis of activated Val-AMP. The other activity is designated 'posttransfer' editing and involves deacylation of mischarged Val-tRNA(Ile). The chain is Isoleucine--tRNA ligase from Latilactobacillus sakei subsp. sakei (strain 23K) (Lactobacillus sakei subsp. sakei).